The sequence spans 403 residues: S-adenosylmethionine synthase (403 aa).

An ATP-binding site is contributed by His-17. Asp-19 is a Mg(2+) binding site. Glu-45 contacts K(+). L-methionine contacts are provided by Glu-58 and Gln-104. The tract at residues 104–114 (QSPDIAQGVDT) is flexible loop. Residues 179–181 (DGK), 250–251 (KF), Asp-259, 265–266 (RK), Ala-282, and Lys-286 contribute to the ATP site. Asp-259 contacts L-methionine. Lys-290 lines the L-methionine pocket.

It belongs to the AdoMet synthase family. As to quaternary structure, homotetramer; dimer of dimers. It depends on Mg(2+) as a cofactor. K(+) is required as a cofactor.

It localises to the cytoplasm. It catalyses the reaction L-methionine + ATP + H2O = S-adenosyl-L-methionine + phosphate + diphosphate. The protein operates within amino-acid biosynthesis; S-adenosyl-L-methionine biosynthesis; S-adenosyl-L-methionine from L-methionine: step 1/1. Functionally, catalyzes the formation of S-adenosylmethionine (AdoMet) from methionine and ATP. The overall synthetic reaction is composed of two sequential steps, AdoMet formation and the subsequent tripolyphosphate hydrolysis which occurs prior to release of AdoMet from the enzyme. This Mycobacterium bovis (strain ATCC BAA-935 / AF2122/97) protein is S-adenosylmethionine synthase.